We begin with the raw amino-acid sequence, 270 residues long: Formamidopyrimidine-DNA glycosylase (270 aa).

P2 (schiff-base intermediate with DNA) is an active-site residue. The active-site Proton donor is E3. K58 serves as the catalytic Proton donor; for beta-elimination activity. Residues H90, R109, and R152 each contribute to the DNA site. An FPG-type zinc finger spans residues R237 to K270. R260 acts as the Proton donor; for delta-elimination activity in catalysis.

It belongs to the FPG family. As to quaternary structure, monomer. Zn(2+) serves as cofactor.

It carries out the reaction Hydrolysis of DNA containing ring-opened 7-methylguanine residues, releasing 2,6-diamino-4-hydroxy-5-(N-methyl)formamidopyrimidine.. The catalysed reaction is 2'-deoxyribonucleotide-(2'-deoxyribose 5'-phosphate)-2'-deoxyribonucleotide-DNA = a 3'-end 2'-deoxyribonucleotide-(2,3-dehydro-2,3-deoxyribose 5'-phosphate)-DNA + a 5'-end 5'-phospho-2'-deoxyribonucleoside-DNA + H(+). In terms of biological role, involved in base excision repair of DNA damaged by oxidation or by mutagenic agents. Acts as a DNA glycosylase that recognizes and removes damaged bases. Has a preference for oxidized purines, such as 7,8-dihydro-8-oxoguanine (8-oxoG). Has AP (apurinic/apyrimidinic) lyase activity and introduces nicks in the DNA strand. Cleaves the DNA backbone by beta-delta elimination to generate a single-strand break at the site of the removed base with both 3'- and 5'-phosphates. The chain is Formamidopyrimidine-DNA glycosylase from Novosphingobium aromaticivorans (strain ATCC 700278 / DSM 12444 / CCUG 56034 / CIP 105152 / NBRC 16084 / F199).